Here is a 649-residue protein sequence, read N- to C-terminus: 1-deoxy-D-xylulose-5-phosphate synthase (649 aa).

Thiamine diphosphate contacts are provided by residues His74 and 115-117 (GHA). Residue Asp146 coordinates Mg(2+). Thiamine diphosphate-binding positions include 147-148 (GA), Asn176, Tyr292, and Glu375. A Mg(2+)-binding site is contributed by Asn176.

It belongs to the transketolase family. DXPS subfamily. Homodimer. It depends on Mg(2+) as a cofactor. Thiamine diphosphate serves as cofactor.

The catalysed reaction is D-glyceraldehyde 3-phosphate + pyruvate + H(+) = 1-deoxy-D-xylulose 5-phosphate + CO2. Its pathway is metabolic intermediate biosynthesis; 1-deoxy-D-xylulose 5-phosphate biosynthesis; 1-deoxy-D-xylulose 5-phosphate from D-glyceraldehyde 3-phosphate and pyruvate: step 1/1. Catalyzes the acyloin condensation reaction between C atoms 2 and 3 of pyruvate and glyceraldehyde 3-phosphate to yield 1-deoxy-D-xylulose-5-phosphate (DXP). In Synechococcus sp. (strain JA-3-3Ab) (Cyanobacteria bacterium Yellowstone A-Prime), this protein is 1-deoxy-D-xylulose-5-phosphate synthase.